The chain runs to 329 residues: DNA-directed RNA polymerase subunit alpha (329 aa).

The segment at 1–235 (MLGSVTDFLK…EQLEAFVDLR (235 aa)) is alpha N-terminal domain (alpha-NTD). Residues 249-329 (FDPILLRPVD…NWPPASIADE (81 aa)) form an alpha C-terminal domain (alpha-CTD) region.

This sequence belongs to the RNA polymerase alpha chain family. As to quaternary structure, homodimer. The RNAP catalytic core consists of 2 alpha, 1 beta, 1 beta' and 1 omega subunit. When a sigma factor is associated with the core the holoenzyme is formed, which can initiate transcription.

The enzyme catalyses RNA(n) + a ribonucleoside 5'-triphosphate = RNA(n+1) + diphosphate. DNA-dependent RNA polymerase catalyzes the transcription of DNA into RNA using the four ribonucleoside triphosphates as substrates. The sequence is that of DNA-directed RNA polymerase subunit alpha from Aeromonas hydrophila subsp. hydrophila (strain ATCC 7966 / DSM 30187 / BCRC 13018 / CCUG 14551 / JCM 1027 / KCTC 2358 / NCIMB 9240 / NCTC 8049).